The following is a 262-amino-acid chain: 14-3-3 protein epsilon (262 aa).

The segment at 236 to 262 (QAEEVDPNAGDGEPKEQIQDVEDQDVS) is disordered. Residue serine 262 is modified to Phosphoserine.

It belongs to the 14-3-3 family. As to quaternary structure, homodimer. Interacts with phosphorylated yki. Interacts with pav (when serine phosphorylated); the interaction is necessary for association of the complex pav-14-3-3epsilon complex to the microtubules, thereby inhibiting microtubule sliding.

Positively regulates Ras-mediated pathways. Acts downstream or parallel to Raf, but upstream of nuclear factors in Ras signaling. Three mutants have been isolated, that suppress the rough eye phenotype caused by mutated Ras1 (sev-Ras1 v12). Inhibits yki activity by restricting its nuclear localization. Together with pav, has a role in the inhibition of microtubule sliding during neurite outgrowth. This chain is 14-3-3 protein epsilon (14-3-3epsilon), found in Drosophila melanogaster (Fruit fly).